A 176-amino-acid polypeptide reads, in one-letter code: Large ribosomal subunit protein uL10 (176 aa).

The protein belongs to the universal ribosomal protein uL10 family. Part of the ribosomal stalk of the 50S ribosomal subunit. The N-terminus interacts with L11 and the large rRNA to form the base of the stalk. The C-terminus forms an elongated spine to which L12 dimers bind in a sequential fashion forming a multimeric L10(L12)X complex.

In terms of biological role, forms part of the ribosomal stalk, playing a central role in the interaction of the ribosome with GTP-bound translation factors. The chain is Large ribosomal subunit protein uL10 from Nocardia farcinica (strain IFM 10152).